The sequence spans 366 residues: N-acetyl-L-citrulline deacetylase (366 aa).

Residues histidine 72 and aspartate 103 each coordinate Co(2+). Catalysis depends on glutamate 130, which acts as the Proton donor/acceptor. Glutamate 155 contacts Co(2+).

Belongs to the peptidase M20A family. N-acetylcitrulline deacetylase subfamily. In terms of assembly, forms homodimers in the crystal, but higher order oligomers may form in solution. It depends on Co(2+) as a cofactor.

It carries out the reaction N(2)-acetyl-L-citrulline + H2O = L-citrulline + acetate. The catalysed reaction is N(2)-acetyl-L-ornithine + H2O = L-ornithine + acetate. Its pathway is amino-acid biosynthesis; L-arginine biosynthesis. Its function is as follows. Catalyzes the deacetylation of N-acetyl-L-citrulline to produce L-citrulline. This is a step in an alternative arginine biosynthesis pathway. Is also able to catalyze the deacetylation of N-acetylornithine in vitro, with almost equal velocity. However, this reaction may be not relevant in vivo since Xanthomonas does not possess the canonical argF gene and cannot convert ornithine to citrulline via ArgF'. The protein is N-acetyl-L-citrulline deacetylase of Xanthomonas campestris pv. campestris (strain ATCC 33913 / DSM 3586 / NCPPB 528 / LMG 568 / P 25).